Here is a 334-residue protein sequence, read N- to C-terminus: Holliday junction branch migration complex subunit RuvB (334 aa).

Positions 4 to 184 (ADRLIQPQLQ…FGIPLRLEFY (181 aa)) are large ATPase domain (RuvB-L). Residues Arg24, Gly65, Lys68, Thr69, Thr70, 131 to 133 (EDY), Arg174, Tyr184, and Arg221 contribute to the ATP site. Thr69 is a Mg(2+) binding site. A small ATPAse domain (RuvB-S) region spans residues 185-255 (NVKDLSTIVT…VAELALNLLD (71 aa)). Residues 258–334 (GEGFDYMDRK…YVHFGMIKPE (77 aa)) are head domain (RuvB-H). DNA is bound by residues Arg294, Arg313, and Arg318.

Belongs to the RuvB family. As to quaternary structure, homohexamer. Forms an RuvA(8)-RuvB(12)-Holliday junction (HJ) complex. HJ DNA is sandwiched between 2 RuvA tetramers; dsDNA enters through RuvA and exits via RuvB. An RuvB hexamer assembles on each DNA strand where it exits the tetramer. Each RuvB hexamer is contacted by two RuvA subunits (via domain III) on 2 adjacent RuvB subunits; this complex drives branch migration. In the full resolvosome a probable DNA-RuvA(4)-RuvB(12)-RuvC(2) complex forms which resolves the HJ.

It localises to the cytoplasm. It carries out the reaction ATP + H2O = ADP + phosphate + H(+). The RuvA-RuvB-RuvC complex processes Holliday junction (HJ) DNA during genetic recombination and DNA repair, while the RuvA-RuvB complex plays an important role in the rescue of blocked DNA replication forks via replication fork reversal (RFR). RuvA specifically binds to HJ cruciform DNA, conferring on it an open structure. The RuvB hexamer acts as an ATP-dependent pump, pulling dsDNA into and through the RuvAB complex. RuvB forms 2 homohexamers on either side of HJ DNA bound by 1 or 2 RuvA tetramers; 4 subunits per hexamer contact DNA at a time. Coordinated motions by a converter formed by DNA-disengaged RuvB subunits stimulates ATP hydrolysis and nucleotide exchange. Immobilization of the converter enables RuvB to convert the ATP-contained energy into a lever motion, pulling 2 nucleotides of DNA out of the RuvA tetramer per ATP hydrolyzed, thus driving DNA branch migration. The RuvB motors rotate together with the DNA substrate, which together with the progressing nucleotide cycle form the mechanistic basis for DNA recombination by continuous HJ branch migration. Branch migration allows RuvC to scan DNA until it finds its consensus sequence, where it cleaves and resolves cruciform DNA. In Shewanella oneidensis (strain ATCC 700550 / JCM 31522 / CIP 106686 / LMG 19005 / NCIMB 14063 / MR-1), this protein is Holliday junction branch migration complex subunit RuvB.